The following is a 601-amino-acid chain: Proteasome-associated ATPase (601 aa).

The span at 1 to 15 (MSGPRSGSGSGGSTG) shows a compositional bias: gly residues. Residues 1–29 (MSGPRSGSGSGGSTGRPGDADSQRSAYEK) form a disordered region. The segment covering 18–29 (GDADSQRSAYEK) has biased composition (basic and acidic residues). The stretch at 19–106 (DADSQRSAYE…LKEEVDRLAQ (88 aa)) forms a coiled coil. 289-294 (GCGKTL) is a binding site for ATP. Residues 600 to 601 (YL) form a docks into pockets in the proteasome alpha-ring region.

The protein belongs to the AAA ATPase family. Homohexamer. Assembles into a hexameric ring structure that caps the 20S proteasome core. Strongly interacts with the prokaryotic ubiquitin-like protein Pup through a hydrophobic interface; the interacting region of ARC lies in its N-terminal coiled-coil domain. There is one Pup binding site per ARC hexamer ring. Upon ATP-binding, the C-terminus of ARC interacts with the alpha-rings of the proteasome core, possibly by binding to the intersubunit pockets.

It functions in the pathway protein degradation; proteasomal Pup-dependent pathway. Its function is as follows. ATPase which is responsible for recognizing, binding, unfolding and translocation of pupylated proteins into the bacterial 20S proteasome core particle. May be essential for opening the gate of the 20S proteasome via an interaction with its C-terminus, thereby allowing substrate entry and access to the site of proteolysis. Thus, the C-termini of the proteasomal ATPase may function like a 'key in a lock' to induce gate opening and therefore regulate proteolysis. The sequence is that of Proteasome-associated ATPase from Parafrankia sp. (strain EAN1pec).